Consider the following 95-residue polypeptide: Small ribosomal subunit protein bS21 (95 aa).

Residues 56–95 (KLARKKMQREGLLPMKPKPVFGAGPGAGRGGPAAGPRGPR) are disordered. The segment covering 78–88 (AGPGAGRGGPA) has biased composition (gly residues).

It belongs to the bacterial ribosomal protein bS21 family.

The chain is Small ribosomal subunit protein bS21 from Nitrobacter winogradskyi (strain ATCC 25391 / DSM 10237 / CIP 104748 / NCIMB 11846 / Nb-255).